The chain runs to 546 residues: Low-affinity methionine permease (546 aa).

Over 1-70 (MEPLLFNSGK…QGRHLGVFST (70 aa)) the chain is Extracellular. Residues 71–91 (VVLFVSRIMGSGIFAVPSVIL) traverse the membrane as a helical segment. Topologically, residues 92-98 (LNTGGNK) are cytoplasmic. The helical transmembrane segment at 99-119 (LIYFAIWVFSAAIAFAGLYLF) threads the bilayer. Residues 120–148 (LEFGSWIPKSGGRKNFLERSFERPRLLIS) lie on the Extracellular side of the membrane. A helical membrane pass occupies residues 149-169 (VVFSCYSVLTGYALTGSIVFG). The Cytoplasmic portion of the chain corresponds to 170-188 (KYVLSAFGVTDDSWSKYVS). A helical transmembrane segment spans residues 189–209 (ISFIIFAVLIHGVSVRHGVFI). The Extracellular segment spans residues 210–213 (QNAL). The helical transmembrane segment at 214-234 (GGLKLIMIVLMCFAGLYTLFF) threads the bilayer. Over 235 to 254 (YKSTGQVAWDLPVTQVEKDS) the chain is Cytoplasmic. Residues 255-275 (LLSVSSIATAFISSFFCFSGW) form a helical membrane-spanning segment. Residues 276 to 297 (DTVHTVTSEIKNPVKTLKVSGP) lie on the Extracellular side of the membrane. A helical transmembrane segment spans residues 298–318 (LSLIICFVCYTMMNVAYLKVL). Residue Thr319 is a topological domain, cytoplasmic. A helical membrane pass occupies residues 320-340 (YEEIVSAGPLVGSVLFTKLFG). Topologically, residues 341–346 (PRVGGK) are extracellular. A helical membrane pass occupies residues 347-367 (FIAFSIAISAASNILVVIYSI). At 368–393 (SRVNQEIFKEGYLPFSIHMSKNWPFD) the chain is on the cytoplasmic side. A helical membrane pass occupies residues 394–414 (APLPSISLCGFITIAWILILP). Residues 415–423 (KEGESFNYL) lie on the Extracellular side of the membrane. Residues 424–444 (VSMDGYGNQFFLLLVAIGLFI) form a helical membrane-spanning segment. Residues 445–459 (WRFKHKNEVPEIRAS) lie on the Cytoplasmic side of the membrane. Residues 460-480 (TFGVLAIITLSLYMLMAPFFA) form a helical membrane-spanning segment. The Extracellular segment spans residues 481 to 494 (DPSLNRVGFLPPYQ). A helical membrane pass occupies residues 495 to 515 (IMSLLVIVACFFFWLVKFVLL). Topologically, residues 516-546 (PKFFHYKLLPKITYLHDGLIVTEWVKKPCLC) are cytoplasmic.

It to yeast high affinity methionine permease (MUP1).

It is found in the membrane. Its function is as follows. Very low affinity permease for methionine. In Saccharomyces cerevisiae (strain ATCC 204508 / S288c) (Baker's yeast), this protein is Low-affinity methionine permease (MUP3).